Reading from the N-terminus, the 346-residue chain is D-alanine--D-alanine ligase A (346 aa).

Residues 138-332 (KRLFLAAGVE…FAELCERICR (195 aa)) enclose the ATP-grasp domain. 164–217 (QLGFPLVVKPNSQGSTVGLSIVHSQAELQPAIELAGRYGDEVMLERFVAGREVT) provides a ligand contact to ATP. D286, E299, and N301 together coordinate Mg(2+).

This sequence belongs to the D-alanine--D-alanine ligase family. Mg(2+) serves as cofactor. Mn(2+) is required as a cofactor.

The protein resides in the cytoplasm. It carries out the reaction 2 D-alanine + ATP = D-alanyl-D-alanine + ADP + phosphate + H(+). It participates in cell wall biogenesis; peptidoglycan biosynthesis. Cell wall formation. In Pseudomonas aeruginosa (strain ATCC 15692 / DSM 22644 / CIP 104116 / JCM 14847 / LMG 12228 / 1C / PRS 101 / PAO1), this protein is D-alanine--D-alanine ligase A.